Consider the following 357-residue polypeptide: Carbamoyl phosphate synthase small chain (357 aa).

A CPSase region spans residues 1–168 (MSKRLLILED…STATAYPSPN (168 aa)). 3 residues coordinate L-glutamine: serine 46, glycine 220, and glycine 222. Positions 172–357 (KVVVVDFGLK…FMDLMDNFKK (186 aa)) constitute a Glutamine amidotransferase type-1 domain. The active-site Nucleophile is cysteine 247. 5 residues coordinate L-glutamine: leucine 248, glutamine 251, asparagine 289, glycine 291, and tyrosine 292. Residues histidine 331 and aspartate 333 contribute to the active site.

Belongs to the CarA family. In terms of assembly, composed of two chains; the small (or glutamine) chain promotes the hydrolysis of glutamine to ammonia, which is used by the large (or ammonia) chain to synthesize carbamoyl phosphate. Tetramer of heterodimers (alpha,beta)4.

The enzyme catalyses hydrogencarbonate + L-glutamine + 2 ATP + H2O = carbamoyl phosphate + L-glutamate + 2 ADP + phosphate + 2 H(+). It carries out the reaction L-glutamine + H2O = L-glutamate + NH4(+). Its pathway is amino-acid biosynthesis; L-arginine biosynthesis; carbamoyl phosphate from bicarbonate: step 1/1. It participates in pyrimidine metabolism; UMP biosynthesis via de novo pathway; (S)-dihydroorotate from bicarbonate: step 1/3. Functionally, small subunit of the glutamine-dependent carbamoyl phosphate synthetase (CPSase). CPSase catalyzes the formation of carbamoyl phosphate from the ammonia moiety of glutamine, carbonate, and phosphate donated by ATP, constituting the first step of 2 biosynthetic pathways, one leading to arginine and/or urea and the other to pyrimidine nucleotides. The small subunit (glutamine amidotransferase) binds and cleaves glutamine to supply the large subunit with the substrate ammonia. This chain is Carbamoyl phosphate synthase small chain, found in Lactococcus lactis subsp. cremoris (strain MG1363).